The primary structure comprises 300 residues: tRNA-cytidine(32) 2-sulfurtransferase (300 aa).

A PP-loop motif motif is present at residues 57–62; sequence SGGKDS. 3 residues coordinate [4Fe-4S] cluster: Cys-132, Cys-135, and Cys-223.

It belongs to the TtcA family. Homodimer. Requires Mg(2+) as cofactor. [4Fe-4S] cluster is required as a cofactor.

It localises to the cytoplasm. The catalysed reaction is cytidine(32) in tRNA + S-sulfanyl-L-cysteinyl-[cysteine desulfurase] + AH2 + ATP = 2-thiocytidine(32) in tRNA + L-cysteinyl-[cysteine desulfurase] + A + AMP + diphosphate + H(+). Its pathway is tRNA modification. Catalyzes the ATP-dependent 2-thiolation of cytidine in position 32 of tRNA, to form 2-thiocytidine (s(2)C32). The sulfur atoms are provided by the cysteine/cysteine desulfurase (IscS) system. This chain is tRNA-cytidine(32) 2-sulfurtransferase, found in Xanthomonas campestris pv. campestris (strain 8004).